A 495-amino-acid polypeptide reads, in one-letter code: DNA-directed RNA polymerase subunit alpha (495 aa).

The tract at residues 1–301 (MPYIKHIETK…RMLASLQAPP (301 aa)) is alpha N-terminal domain (alpha-NTD). 2 disordered regions span residues 159–227 (SLVP…EAPH) and 391–495 (QEQV…PEET). The insert stretch occupies residues 170-237 (PRDPLEPEND…IPSMRDDHMT (68 aa)). Residues 172–186 (DPLEPENDSKSETKS) are compositionally biased toward basic and acidic residues. 2 stretches are compositionally biased toward polar residues: residues 207–219 (VNAQ…SNST) and 391–403 (QEQV…SQIA). The interval 317–495 (AKEIALTPIE…LSSSQNPEET (179 aa)) is alpha C-terminal domain (alpha-CTD). A compositionally biased stretch (basic and acidic residues) spans 417–426 (RPIDSKETRR). Basic residues predominate over residues 444 to 453 (RKSSKTKVKA). 2 stretches are compositionally biased toward polar residues: residues 464–473 (KSANLQQAEE) and 486–495 (LSSSQNPEET).

The protein belongs to the RNA polymerase alpha chain family. As to quaternary structure, in plastids the minimal PEP RNA polymerase catalytic core is composed of four subunits: alpha, beta, beta', and beta''. When a (nuclear-encoded) sigma factor is associated with the core the holoenzyme is formed, which can initiate transcription.

The protein localises to the plastid. It is found in the chloroplast. It catalyses the reaction RNA(n) + a ribonucleoside 5'-triphosphate = RNA(n+1) + diphosphate. DNA-dependent RNA polymerase catalyzes the transcription of DNA into RNA using the four ribonucleoside triphosphates as substrates. This is DNA-directed RNA polymerase subunit alpha from Nephroselmis olivacea (Green alga).